Consider the following 51-residue polypeptide: AAPPQHLCGSHLVDALYLVCGERGFFYNPKGIVEQCCHKPCNIFDLQNYCN.

3 disulfide bridges follow: Cys8-Cys37, Cys20-Cys50, and Cys36-Cys41.

The protein belongs to the insulin family. Heterodimer of a B chain and an A chain linked by two disulfide bonds.

The protein resides in the secreted. In terms of biological role, insulin decreases blood glucose concentration. It increases cell permeability to monosaccharides, amino acids and fatty acids. It accelerates glycolysis, the pentose phosphate cycle, and glycogen synthesis in liver. The polypeptide is Insulin-2 (Katsuwonus pelamis (Skipjack tuna)).